Reading from the N-terminus, the 106-residue chain is HIG1 domain family member 2A (106 aa).

The residue at position 2 (A2) is an N-acetylalanine. The 87-residue stretch at 20–106 folds into the HIG1 domain; it reads VIEGFSPTVY…LAASAMKSQA (87 aa). 2 helical membrane-spanning segments follow: residues 47–67 and 83–103; these read PMVP…LYCF and IAAQ…SAMK.

In terms of assembly, associates with cytochrome c oxidase (COX, complex IV); proposed complex component.

It is found in the mitochondrion membrane. The protein resides in the mitochondrion inner membrane. Proposed subunit of cytochrome c oxidase (COX, complex IV), which is the terminal component of the mitochondrial respiratory chain that catalyzes the reduction of oxygen to water. May be involved in cytochrome c oxidase activity. May play a role in the assembly of respiratory supercomplexes. This Mus musculus (Mouse) protein is HIG1 domain family member 2A (Higd2a).